The following is a 166-amino-acid chain: Small ribosomal subunit protein uS5 (166 aa).

Positions 12–75 (YIEKLVQVNR…EAARRNMIQV (64 aa)) constitute an S5 DRBM domain.

Belongs to the universal ribosomal protein uS5 family. In terms of assembly, part of the 30S ribosomal subunit. Contacts proteins S4 and S8.

Functionally, with S4 and S12 plays an important role in translational accuracy. Located at the back of the 30S subunit body where it stabilizes the conformation of the head with respect to the body. The protein is Small ribosomal subunit protein uS5 of Pseudomonas entomophila (strain L48).